The sequence spans 556 residues: MPVVEVKLWDLERLTGASLDESTVRDLLPRLKCEVEEVSGEDVVYEATHDRPDLYSAELLSVYLKGLLGVEDGLPRPRVGSAEGVAEVEGPAYRPYAFFAVVRGVSLDDEAIRQLMQLQEKVHLTYGRNRRKVSIGLYDLDGIKLPVRYVAASPETRMKPLGFAIEMTLREVLEKHPKGVEYGHLVKGHGEYPLIVDAEGKVVSFPPITNSEDFRVTESTRDVLIDVTSTDPEAGRRIISLFAHAVAVRGGEVRPLRLKGALDEESPRMEPEEVVYDVSMNRDLLGLDLGVEETVRLLRAMRMDAEPAGNGKVAVRYPYFRVDILHPVDIAEEVAMGYGYERIEPAVIPPLHPGREDPIEVFTRALREGMVGLGFVEVNNYMMTSASLMFDAMLLPRQPIVEVENPRHEAYHALRTWIVPQLLRLMSSSKHAGYPQRVFEAGDVAIPDESRDNRVREERRLAFAVAGKGVTLTDGLAALKGLFRQLGVSFKLEKAEHPSFIAGRVARVVTEAGDAGIVGEVHPQVLVNFGLEVPVVAGELNVEVVMKCYLARLGGA.

One can recognise a B5 domain in the interval 269–345; the sequence is MEPEEVVYDV…MGYGYERIEP (77 aa). Positions 323, 329, 332, and 333 each coordinate Mg(2+).

The protein belongs to the phenylalanyl-tRNA synthetase beta subunit family. Type 2 subfamily. As to quaternary structure, tetramer of two alpha and two beta subunits. Mg(2+) serves as cofactor.

It localises to the cytoplasm. The enzyme catalyses tRNA(Phe) + L-phenylalanine + ATP = L-phenylalanyl-tRNA(Phe) + AMP + diphosphate + H(+). The sequence is that of Phenylalanine--tRNA ligase beta subunit from Thermofilum pendens (strain DSM 2475 / Hrk 5).